Reading from the N-terminus, the 356-residue chain is tRNA N6-adenosine threonylcarbamoyltransferase (356 aa).

The Fe cation site is built by histidine 115 and histidine 119. Substrate contacts are provided by residues 138–142, aspartate 171, glycine 184, and asparagine 283; that span reads LVSGG. Aspartate 311 lines the Fe cation pocket.

Belongs to the KAE1 / TsaD family. Fe(2+) is required as a cofactor.

It localises to the cytoplasm. It carries out the reaction L-threonylcarbamoyladenylate + adenosine(37) in tRNA = N(6)-L-threonylcarbamoyladenosine(37) in tRNA + AMP + H(+). Required for the formation of a threonylcarbamoyl group on adenosine at position 37 (t(6)A37) in tRNAs that read codons beginning with adenine. Is involved in the transfer of the threonylcarbamoyl moiety of threonylcarbamoyl-AMP (TC-AMP) to the N6 group of A37, together with TsaE and TsaB. TsaD likely plays a direct catalytic role in this reaction. The chain is tRNA N6-adenosine threonylcarbamoyltransferase from Prochlorococcus marinus (strain MIT 9215).